We begin with the raw amino-acid sequence, 896 residues long: Trehalose-phosphatase (896 aa).

The tract at residues 1–554 (MTTTAQDNSP…SNDDMERKMT (554 aa)) is glycosyltransferase.

It in the N-terminal section; belongs to the glycosyltransferase 20 family. This sequence in the C-terminal section; belongs to the trehalose phosphatase family. In terms of assembly, the trehalose synthase complex is composed of the two catalytic subunits TPS1 and TPS2, and at least one of the two regulatory subunits TPS3 or TSL1. It depends on Mg(2+) as a cofactor.

Its subcellular location is the cytoplasm. The catalysed reaction is alpha,alpha-trehalose 6-phosphate + H2O = alpha,alpha-trehalose + phosphate. The protein operates within carbohydrate biosynthesis. Its activity is regulated as follows. Inhibited by EDTA. Phosphatase catalytic subunit of the trehalose synthase complex that catalyzes the production of trehalose from glucose-6-phosphate and UDP-alpha-D-glucose in a two step process. In Saccharomyces cerevisiae (strain ATCC 204508 / S288c) (Baker's yeast), this protein is Trehalose-phosphatase.